A 435-amino-acid polypeptide reads, in one-letter code: Antho-RFamide neuropeptides type 1 (435 aa).

An N-terminal signal peptide occupies residues 1-22 (MTTVSYVTILLTVLVQVLTSDA). The propeptide occupies 23–193 (KATNNKRELS…SVPGRYGREL (171 aa)). Position 194 is a pyrrolidone carboxylic acid (Q194). Phenylalanine amide is present on F197. The propeptide occupies 199–201 (REL). A Phenylalanine amide modification is found at F205. A propeptide spanning residues 207–209 (REA) is cleaved from the precursor. Position 213 is a phenylalanine amide (F213). A propeptide spanning residues 215 to 217 (REL) is cleaved from the precursor. F221 bears the Phenylalanine amide mark. The propeptide occupies 223-225 (REF). The residue at position 229 (F229) is a Phenylalanine amide. Residues 230–371 (GREDQGRFGR…EDIAEADQGR (142 aa)) show a composition bias toward basic and acidic residues. Disordered regions lie at residues 230-374 (GRED…RFGR) and 386-435 (AKKR…AKTS). A propeptide spanning residues 231 to 233 (RED) is cleaved from the precursor. F237 carries the post-translational modification Phenylalanine amide. The propeptide occupies 239-241 (RED). The residue at position 245 (F245) is a Phenylalanine amide. Positions 247–249 (RED) are excised as a propeptide. F253 bears the Phenylalanine amide mark. Positions 255 to 257 (RED) are excised as a propeptide. The residue at position 261 (F261) is a Phenylalanine amide. The propeptide occupies 263–265 (RED). F269 is subject to Phenylalanine amide. Residues 271–273 (RED) constitute a propeptide that is removed on maturation. Position 277 is a phenylalanine amide (F277). Residues 279–281 (REL) constitute a propeptide that is removed on maturation. Residue F285 is modified to Phenylalanine amide. A propeptide spanning residues 287–289 (REF) is cleaved from the precursor. Phenylalanine amide is present on F293. Positions 295-297 (RED) are excised as a propeptide. F301 carries the phenylalanine amide modification. The propeptide occupies 303-305 (RED). Position 309 is a phenylalanine amide (F309). The propeptide occupies 311 to 313 (REL). F317 carries the post-translational modification Phenylalanine amide. Residues 319–321 (RED) constitute a propeptide that is removed on maturation. A Phenylalanine amide modification is found at F325. Positions 327 to 329 (RED) are excised as a propeptide. F333 is modified (phenylalanine amide). The propeptide occupies 335–342 (REDLAKED). A Phenylalanine amide modification is found at F346. Residues 348–355 (REDLAKED) constitute a propeptide that is removed on maturation. Residue F359 is modified to Phenylalanine amide. Positions 361–368 (REDIAEAD) are excised as a propeptide. The residue at position 372 (F372) is a Phenylalanine amide. Residues 374–435 (RNAAAAAAAA…KSDDALAKTS (62 aa)) constitute a propeptide that is removed on maturation. A compositionally biased stretch (basic and acidic residues) spans 398-435 (SDPKPQTRFRDGKDMQEKRKVEKKDKIEKSDDALAKTS).

The protein belongs to the FARP (FMRFamide related peptide) family.

The protein resides in the secreted. Functionally, not known but it could act as a transmitter at neuromuscular synapses. The sequence is that of Antho-RFamide neuropeptides type 1 from Anthopleura elegantissima (Green aggregating anemone).